The sequence spans 305 residues: ATP-dependent Clp protease proteolytic subunit-related protein 4, chloroplastic (305 aa).

A chloroplast-targeting transit peptide spans 1–68; it reads MEVAAATATS…SSDLCGAKLR (68 aa).

The protein belongs to the peptidase S14 family. Component of the chloroplastic Clp protease core complex which consist of at least 16 proteins: CLPP4 (3 copies), CLPP5 (3 copies), CLPR4 (2 copies), ClpP1 (1 copy), CLPP6 (1 copy), CLPR2 (1 copy), CLPT1 (1 copy), CLPT2 (1 copy) and 3 copies of CLPP3 and/or CLPR1 and/or CLPR3. The core complex is organized in two heptameric rings, one containing CLPP3,4,5,6 in a 1:2:3:1 ratio and the other CLPP1 and CLPR1,2,3,4 in a 3:1:1:1:1 ratio.

Its subcellular location is the plastid. It is found in the chloroplast. Functionally, involved in plastid protein homeostasis. This Arabidopsis thaliana (Mouse-ear cress) protein is ATP-dependent Clp protease proteolytic subunit-related protein 4, chloroplastic.